The primary structure comprises 757 residues: Chloride channel protein C (757 aa).

Over 1 to 96 (MGSSLNKPLS…LHLKKTFGKW (96 aa)) the chain is Cytoplasmic. A run of 11 helical transmembrane segments spans residues 97–117 (IICL…KMVV), 141–161 (FLTF…MVIV), 196–216 (IVSL…GPMI), 253–273 (FISI…IGGV), 292–312 (TFFT…GIGS), 337–357 (LLCF…FVFL), 378–398 (FEAL…SFIF), 462–482 (LLVF…LWVA), 484–504 (GLFV…GQTI), 506–526 (MWFT…AMMA), and 535–555 (IVVI…IILA). 2 consecutive CBS domains span residues 600–667 (MSKN…TGEE) and 710–757 (MNSS…NDLF).

This sequence belongs to the chloride channel (TC 2.A.49) family.

The protein localises to the membrane. Its function is as follows. Voltage-gated chloride channel. Chloride channels may have several functions including the regulation of cell volume, membrane potential stabilization and signal transduction. This Dictyostelium discoideum (Social amoeba) protein is Chloride channel protein C (clcC).